The chain runs to 85 residues: Oxytocin-neurophysin 1 (85 aa).

Residue glycine 3 is modified to Glycine amide. Disulfide bonds link cysteine 16/cysteine 60, cysteine 19/cysteine 33, cysteine 27/cysteine 50, cysteine 34/cysteine 40, cysteine 67/cysteine 79, and cysteine 80/cysteine 85.

Belongs to the vasopressin/oxytocin family. In terms of assembly, interacts with oxytocin receptor (Ki=1.5 nM). Interacts with vasopressin V1aR/AVPR1A (Ki=37 nM), V1bR/AVPR1B (Ki=222 nM), and V2R/AVPR2 receptors (Ki=823 nM).

Functionally, neurophysin 1 specifically binds oxytocin. Oxytocin causes contraction of the smooth muscle of the uterus and of the mammary gland. Acts by binding to oxytocin receptor (OXTR). This is Oxytocin-neurophysin 1 (OXT) from Papio hamadryas (Hamadryas baboon).